The sequence spans 466 residues: Uronate isomerase (466 aa).

The protein belongs to the metallo-dependent hydrolases superfamily. Uronate isomerase family.

The enzyme catalyses D-glucuronate = D-fructuronate. It carries out the reaction aldehydo-D-galacturonate = keto-D-tagaturonate. Its pathway is carbohydrate metabolism; pentose and glucuronate interconversion. This Brucella melitensis biotype 1 (strain ATCC 23456 / CCUG 17765 / NCTC 10094 / 16M) protein is Uronate isomerase (uxaC).